The primary structure comprises 476 residues: Ribulose bisphosphate carboxylase large chain (476 aa).

Residues 1 to 2 (MS) constitute a propeptide that is removed on maturation. N-acetylproline is present on Pro-3. Lys-14 carries the N6,N6,N6-trimethyllysine modification. Asn-123 and Thr-173 together coordinate substrate. The Proton acceptor role is filled by Lys-175. A substrate-binding site is contributed by Lys-177. Mg(2+)-binding residues include Lys-201, Asp-203, and Glu-204. The residue at position 201 (Lys-201) is an N6-carboxylysine. The Proton acceptor role is filled by His-294. Substrate is bound by residues Arg-295, His-327, and Ser-379.

It belongs to the RuBisCO large chain family. Type I subfamily. Heterohexadecamer of 8 large chains and 8 small chains; disulfide-linked. The disulfide link is formed within the large subunit homodimers. It depends on Mg(2+) as a cofactor. In terms of processing, the disulfide bond which can form in the large chain dimeric partners within the hexadecamer appears to be associated with oxidative stress and protein turnover.

The protein resides in the plastid. It is found in the chloroplast. The catalysed reaction is 2 (2R)-3-phosphoglycerate + 2 H(+) = D-ribulose 1,5-bisphosphate + CO2 + H2O. The enzyme catalyses D-ribulose 1,5-bisphosphate + O2 = 2-phosphoglycolate + (2R)-3-phosphoglycerate + 2 H(+). Its function is as follows. RuBisCO catalyzes two reactions: the carboxylation of D-ribulose 1,5-bisphosphate, the primary event in carbon dioxide fixation, as well as the oxidative fragmentation of the pentose substrate in the photorespiration process. Both reactions occur simultaneously and in competition at the same active site. This chain is Ribulose bisphosphate carboxylase large chain, found in Brachypodium distachyon (Purple false brome).